The chain runs to 384 residues: Protein cutoff (384 aa).

It belongs to the DXO/Dom3Z family. In terms of assembly, component of the Rhino-Deadlock-Cutoff (RDC) complex, composed of rhi/rhino, del/deadlock and cuff/cutoff. Interacts with rhi/rhino; this interaction is indirect and is mediated by del/deadlock. Interacts with del/deadlock (via C-terminal); this interaction is direct. Interacts with Rat1.

It is found in the cytoplasm. The protein localises to the nucleus. It localises to the chromosome. Its function is as follows. Involved in the piRNA pathway in germline tissues. Part of the Rhino-Deadlock-Cutoff (RDC) complex that stimulates piRNA biogenesis from chromatin regions corresponding to dual-strand, but not single-stranded, piRNA clusters. Promotes transcription of long piRNA precursors by preventing termination at canonical poly(A) sites. As part of the RDC complex, is recruited to chromatin enriched in histone modification H3K9me3 and might contribute to complex interaction by binding nascent transcript nucleic acid chains. Associates with chromatin upon exposure to homologous piRNA. Suppresses cleavage at canonical poly(A) sites by blocking recruitment of the cleavage and polyadenylation specificity factor (CPSF) complex and prevents transcriptional termination by RNA polymerase II, facilitating transcriptional read-through. As part of the RDC complex, involved in suppression of splicing. Catalytically inactive, lacking 5'-3' exonuclease and pyrophosphohydrolase activities. Stabilizes uncapped piRNA precursors in the nucleus, probably by sequestering or blocking the exonuclease activity of Rat1. May also be involved in siRNA biogenesis from dual-strand piRNA clusters. The sequence is that of Protein cutoff (cuff) from Drosophila melanogaster (Fruit fly).